The primary structure comprises 76 residues: ATP synthase subunit 9, mitochondrial (76 aa).

2 helical membrane-spanning segments follow: residues 14-34 and 52-72; these read MATLGLGGAAIGIALVFVALI and ILGFALAEACGLFCLMMSFLL.

This sequence belongs to the ATPase C chain family. As to quaternary structure, F-type ATPases have 2 components, CF(1) - the catalytic core - and CF(0) - the membrane proton channel. CF(1) has five subunits: alpha(3), beta(3), gamma(1), delta(1), epsilon(1). CF(0) has three main subunits: a, b and c.

The protein localises to the mitochondrion membrane. In terms of biological role, mitochondrial membrane ATP synthase (F(1)F(0) ATP synthase or Complex V) produces ATP from ADP in the presence of a proton gradient across the membrane which is generated by electron transport complexes of the respiratory chain. F-type ATPases consist of two structural domains, F(1) - containing the extramembraneous catalytic core and F(0) - containing the membrane proton channel, linked together by a central stalk and a peripheral stalk. During catalysis, ATP synthesis in the catalytic domain of F(1) is coupled via a rotary mechanism of the central stalk subunits to proton translocation. Part of the complex F(0) domain. A homomeric c-ring of probably 10 subunits is part of the complex rotary element. The sequence is that of ATP synthase subunit 9, mitochondrial (ATP9) from Debaryomyces hansenii (strain ATCC 36239 / CBS 767 / BCRC 21394 / JCM 1990 / NBRC 0083 / IGC 2968) (Yeast).